Here is a 181-residue protein sequence, read N- to C-terminus: Iron sulfur cluster assembly protein 1, mitochondrial (181 aa).

The segment at 159-181 (RKTKNPTLGAEAAETPAAATATA) is disordered. Over residues 168–181 (AEAAETPAAATATA) the composition is skewed to low complexity.

It belongs to the NifU family. Component of the core Fe-S cluster (ISC) assembly machinery. Requires [2Fe-2S] cluster as cofactor.

The protein localises to the mitochondrion matrix. It functions in the pathway cofactor biosynthesis; iron-sulfur cluster biosynthesis. In terms of biological role, scaffold protein for the de novo synthesis of iron-sulfur (Fe-S) clusters within mitochondria, which is required for maturation of both mitochondrial and cytoplasmic [2Fe-2S] and [4Fe-4S] proteins. First, a [2Fe-2S] cluster is transiently assembled on the scaffold protein ISU1. In a second step, the cluster is released from ISU1, transferred to a glutaredoxin, followed by the formation of mitochondrial [2Fe-2S] proteins, the synthesis of [4Fe-4S] clusters and their target-specific insertion into the recipient apoproteins. Cluster assembly on ISU1 depends on the function of the cysteine desulfurase complex NFS1-ISD11, which serves as the sulfur donor for cluster synthesis, the iron-binding protein frataxin as the putative iron donor, and the electron transfer chain comprised of ferredoxin reductase and ferredoxin, which receive their electrons from NADH. The chain is Iron sulfur cluster assembly protein 1, mitochondrial (ISU1) from Yarrowia lipolytica (strain CLIB 122 / E 150) (Yeast).